The primary structure comprises 285 residues: HTH-type transcriptional regulator HexR (285 aa).

One can recognise an HTH rpiR-type domain in the interval 2 to 78; sequence KNLLEQIQSR…IQLAQSLASG (77 aa). The segment at residues 38–57 is a DNA-binding region (H-T-H motif); the sequence is IAALAQAAAVSEPTVNRFCR. One can recognise an SIS domain in the interval 122-261; sequence AVDLLIQARQ…ATGVTLRRGV (140 aa).

Its function is as follows. Involved in regulation of glucose metabolism. Transcriptional repressor of the gap-1 gene and of the edd-glk-gltR-2 and zwf-pgl-eda operons. Acts by binding directly to an inverted pseudopalindromic sequence in the promoter region. The sequence is that of HTH-type transcriptional regulator HexR from Pseudomonas aeruginosa (strain ATCC 15692 / DSM 22644 / CIP 104116 / JCM 14847 / LMG 12228 / 1C / PRS 101 / PAO1).